A 389-amino-acid chain; its full sequence is Inner membrane transport protein YdhP (389 aa).

Residues 1-6 (MKINYP) are Cytoplasmic-facing. A helical transmembrane segment spans residues 7-27 (LLALAIGAFGIGTTEFSPMGL). The Periplasmic portion of the chain corresponds to 28 to 43 (LPVIARGVDVSIPAAG). A helical membrane pass occupies residues 44-64 (MLISAYAVGVMVGAPLMTLLL). The Cytoplasmic segment spans residues 65–70 (SHRARR). Residues 71–91 (SALIFLMAIFTLGNVLSAIAP) traverse the membrane as a helical segment. Residues 92–100 (DYMTLMLSR) are Periplasmic-facing. A helical transmembrane segment spans residues 101–121 (ILTSLNHGAFFGLGSVVAASV). Residues 122-130 (VPKHKQASA) are Cytoplasmic-facing. Residues 131–151 (VATMFMGLTLANIGGVPAATW) form a helical membrane-spanning segment. The Periplasmic segment spans residues 152-159 (LGETIGWR). The helical transmembrane segment at 160-180 (MSFLATAGLGVISMVSLFFSL) threads the bilayer. The Cytoplasmic portion of the chain corresponds to 181–203 (PKGGAGARPEVKKELAVLMRPQV). Residues 204 to 224 (LSALLTTVLGAGAMFTLYTYI) traverse the membrane as a helical segment. Residues 225–236 (SPVLQSITHATP) lie on the Periplasmic side of the membrane. A helical membrane pass occupies residues 237–257 (VFVTAMLVLIGVGFSIGNYLG). At 258–266 (GKLADRSVN) the chain is on the cytoplasmic side. Residues 267 to 287 (GTLKGFLLLLMVIMLAIPFLA) traverse the membrane as a helical segment. The Periplasmic portion of the chain corresponds to 288 to 290 (RNE). A helical transmembrane segment spans residues 291–311 (FGAAISMVVWGAATFAVVPPL). Residues 312-330 (QMRVMRVASEAPGLSSSVN) lie on the Cytoplasmic side of the membrane. Residues 331-351 (IGAFNLGNALGAAAGGAVISA) traverse the membrane as a helical segment. The Periplasmic portion of the chain corresponds to 352–356 (GLGYS). Residues 357–377 (FVPVMGAIVAGLALLLVFMSA) traverse the membrane as a helical segment. The Cytoplasmic portion of the chain corresponds to 378–389 (RKQPETVCVANS).

The protein belongs to the major facilitator superfamily.

The protein resides in the cell inner membrane. This is Inner membrane transport protein YdhP (ydhP) from Escherichia coli (strain K12).